The chain runs to 309 residues: Enoyl-CoA hydratase 2, peroxisomal (309 aa).

Residues 95–96 (HG), Lys124, 208–213 (DYNPLH), Gly231, and Phe261 each bind substrate. The MaoC-like domain maps to 183-295 (PQRQPLTVCE…TKVKERNKTV (113 aa)). A Microbody targeting signal motif is present at residues 307 to 309 (SSL).

As to expression, ubiquitous.

The protein resides in the peroxisome. It carries out the reaction a (3R)-3-hydroxyacyl-CoA = a (2E)-enoyl-CoA + H2O. It functions in the pathway lipid metabolism; fatty acid beta-oxidation. Functionally, bidirectional monofunctional enoyl-CoA hydratase 2 involved in the degradation of even cis-unsaturated fatty acids. Devoid of 3-hydroxyacyl-CoA dehydrogenase activity. In Arabidopsis thaliana (Mouse-ear cress), this protein is Enoyl-CoA hydratase 2, peroxisomal (ECH2).